Reading from the N-terminus, the 155-residue chain is Small ribosomal subunit protein uS7cz/uS7cy (155 aa).

This sequence belongs to the universal ribosomal protein uS7 family. Part of the 30S ribosomal subunit.

The protein localises to the plastid. It localises to the chloroplast. Functionally, one of the primary rRNA binding proteins, it binds directly to 16S rRNA where it nucleates assembly of the head domain of the 30S subunit. The chain is Small ribosomal subunit protein uS7cz/uS7cy (rps7-A) from Daucus carota (Wild carrot).